We begin with the raw amino-acid sequence, 436 residues long: Enolase (436 aa).

Residues histidine 159 and glutamate 168 each coordinate substrate. The Proton donor role is filled by glutamate 211. Mg(2+) contacts are provided by aspartate 246, glutamate 295, and aspartate 322. Positions 295 and 322 each coordinate substrate. Lysine 347 serves as the catalytic Proton acceptor. Substrate-binding positions include 374-377 (SHRS) and lysine 398.

It belongs to the enolase family. Homodimer. It depends on Mg(2+) as a cofactor.

The protein resides in the cytoplasm. It catalyses the reaction (2R)-2-phosphoglycerate = phosphoenolpyruvate + H2O. It participates in carbohydrate degradation; glycolysis; pyruvate from D-glyceraldehyde 3-phosphate: step 4/5. In Neocallimastix frontalis (Rumen fungus), this protein is Enolase.